A 240-amino-acid chain; its full sequence is Orotidine 5'-phosphate decarboxylase (240 aa).

Substrate is bound by residues D16, K37, 64–73 (DLKFHDIPTT), T128, R190, Q199, G219, and R220. K66 acts as the Proton donor in catalysis.

It belongs to the OMP decarboxylase family. Type 1 subfamily. Homodimer.

It carries out the reaction orotidine 5'-phosphate + H(+) = UMP + CO2. Its pathway is pyrimidine metabolism; UMP biosynthesis via de novo pathway; UMP from orotate: step 2/2. Catalyzes the decarboxylation of orotidine 5'-monophosphate (OMP) to uridine 5'-monophosphate (UMP). The sequence is that of Orotidine 5'-phosphate decarboxylase from Prochlorococcus marinus (strain SARG / CCMP1375 / SS120).